The chain runs to 93 residues: Putative protein adenylyltransferase MJ0435 (93 aa).

Residues 26–40 carry the GSX(10)DXD motif motif; it reads GSYARNEQKETSDID. Residues aspartate 38, aspartate 40, and aspartate 70 each contribute to the Mg(2+) site.

It belongs to the MntA antitoxin family. In terms of assembly, probably forms a complex with cognate toxin MJ0434. The cofactor is Mg(2+).

It carries out the reaction L-tyrosyl-[protein] + ATP = O-(5'-adenylyl)-L-tyrosyl-[protein] + diphosphate. It catalyses the reaction O-(5'-adenylyl)-L-tyrosyl-[protein] + ATP = O-[5'-(adenylyl-(5'-&gt;3')-adenylyl)]-L-tyrosyl-[protein] + diphosphate. In terms of biological role, probable antitoxin component of a putative type VII toxin-antitoxin (TA) system. Neutralizes cognate toxic MJ0434 by di-AMPylation. This Methanocaldococcus jannaschii (strain ATCC 43067 / DSM 2661 / JAL-1 / JCM 10045 / NBRC 100440) (Methanococcus jannaschii) protein is Putative protein adenylyltransferase MJ0435.